Here is a 305-residue protein sequence, read N- to C-terminus: Diacylglycerol kinase (305 aa).

Residues 1–132 (MRKRARIIYN…VDIGKMNSRY (132 aa)) enclose the DAGKc domain. ATP-binding positions include 10-14 (NPTSG), Thr-41, 67-73 (GDGTLNE), and Thr-94. Residues Lys-213, Asp-216, and Tyr-218 each coordinate Mg(2+). Glu-273 functions as the Proton acceptor in the catalytic mechanism.

It belongs to the diacylglycerol/lipid kinase family. Homodimer. Requires Mg(2+) as cofactor.

It catalyses the reaction a 1,2-diacyl-sn-glycerol + ATP = a 1,2-diacyl-sn-glycero-3-phosphate + ADP + H(+). Catalyzes the phosphorylation of diacylglycerol (DAG) into phosphatidic acid. Is a key enzyme involved in the production of lipoteichoic acid by reintroducing DAG formed from the breakdown of membrane phospholipids into the phosphatidylglycerol biosynthetic pathway. The polypeptide is Diacylglycerol kinase (dagK) (Staphylococcus saprophyticus subsp. saprophyticus (strain ATCC 15305 / DSM 20229 / NCIMB 8711 / NCTC 7292 / S-41)).